The chain runs to 78 residues: Acyl carrier protein (78 aa).

Residues 2–77 (SDTAERIKKI…DAVSYIDEHK (76 aa)) enclose the Carrier domain. Ser-37 bears the O-(pantetheine 4'-phosphoryl)serine mark.

It belongs to the acyl carrier protein (ACP) family. In terms of processing, 4'-phosphopantetheine is transferred from CoA to a specific serine of apo-ACP by AcpS. This modification is essential for activity because fatty acids are bound in thioester linkage to the sulfhydryl of the prosthetic group.

The protein localises to the cytoplasm. The protein operates within lipid metabolism; fatty acid biosynthesis. In terms of biological role, carrier of the growing fatty acid chain in fatty acid biosynthesis. This chain is Acyl carrier protein, found in Zymomonas mobilis subsp. mobilis (strain ATCC 31821 / ZM4 / CP4).